We begin with the raw amino-acid sequence, 67 residues long: Probable Sec-independent protein translocase protein TatE (67 aa).

Residues 4-21 (ISITKLLVVAALIVLVFG) traverse the membrane as a helical segment. The tract at residues 43–67 (MNDDDTSVKKSAEEDVPADKISHKE) is disordered.

It belongs to the TatA/E family. TatE subfamily.

Its subcellular location is the cell inner membrane. Part of the twin-arginine translocation (Tat) system that transports large folded proteins containing a characteristic twin-arginine motif in their signal peptide across membranes. TatE shares overlapping functions with TatA. The polypeptide is Probable Sec-independent protein translocase protein TatE (Enterobacter lignolyticus (strain SCF1)).